Here is a 384-residue protein sequence, read N- to C-terminus: Probable zinc-binding alcohol dehydrogenase Rv1895 (384 aa).

Residues Cys38, His59, Cys89, Cys92, Cys95, and Cys103 each contribute to the Zn(2+) site.

This sequence belongs to the zinc-containing alcohol dehydrogenase family. Requires Zn(2+) as cofactor.

It carries out the reaction a primary alcohol + NAD(+) = an aldehyde + NADH + H(+). The catalysed reaction is a secondary alcohol + NAD(+) = a ketone + NADH + H(+). The chain is Probable zinc-binding alcohol dehydrogenase Rv1895 from Mycobacterium tuberculosis (strain ATCC 25618 / H37Rv).